Here is a 386-residue protein sequence, read N- to C-terminus: Eukaryotic translation initiation factor 3 subunit M (386 aa).

The PCI domain occupies 181–343 (NSELASKVMI…RKVHISSTMH (163 aa)).

It belongs to the eIF-3 subunit M family. In terms of assembly, component of the eukaryotic translation initiation factor 3 (eIF-3) complex.

It is found in the cytoplasm. Functionally, component of the eukaryotic translation initiation factor 3 (eIF-3) complex, which is involved in protein synthesis of a specialized repertoire of mRNAs and, together with other initiation factors, stimulates binding of mRNA and methionyl-tRNAi to the 40S ribosome. The eIF-3 complex specifically targets and initiates translation of a subset of mRNAs involved in cell proliferation. The sequence is that of Eukaryotic translation initiation factor 3 subunit M from Aedes aegypti (Yellowfever mosquito).